The chain runs to 107 residues: MSRIARKQQKNLIQAIAIQRMWRLFELAKSEYAEHPDRSERYVQLIRNISMRNRMSIPREIKNRICKHCYAFLVPGNNARYRLKDGYIVVSCQRCGKEMRYPYKKLK.

Zn(2+)-binding residues include C66, C69, C92, and C95.

Belongs to the eukaryotic/archaeal RNase P protein component 4 family. As to quaternary structure, consists of a catalytic RNA component and at least 4-5 protein subunits. Requires Zn(2+) as cofactor.

It is found in the cytoplasm. It carries out the reaction Endonucleolytic cleavage of RNA, removing 5'-extranucleotides from tRNA precursor.. In terms of biological role, part of ribonuclease P, a protein complex that generates mature tRNA molecules by cleaving their 5'-ends. The polypeptide is Ribonuclease P protein component 4 (Methanosarcina barkeri (strain Fusaro / DSM 804)).